A 474-amino-acid chain; its full sequence is uncharacterized protein (474 aa).

The segment covering 1–11 has biased composition (acidic residues); the sequence is MGGSDFEDDEL. The tract at residues 1–163 is disordered; sequence MGGSDFEDDE…ETSPFNREDG (163 aa). Positions 12–25 are enriched in basic and acidic residues; the sequence is FKDLYGEENEKKVE. Over residues 27 to 39 the composition is skewed to polar residues; the sequence is ASGNQETSNVTPT. The span at 40 to 76 shows a compositional bias: basic and acidic residues; sequence KENEGYEELEKSGEAGAERTKENPFREEPGADFDRSG. A compositionally biased stretch (polar residues) spans 129–140; that stretch reads NDNYNENQSALT. RRM domains lie at 163 to 245 and 247 to 324; these read GKMF…EQEK and AKMF…RATP. The segment at 412-474 is disordered; the sequence is DPSKMNQGTG…GGHSFHPYRR (63 aa). Positions 425–434 are enriched in low complexity; it reads PFSPSMPSGS. The span at 435–444 shows a compositional bias: gly residues; sequence SRGGYHGRNP.

The protein resides in the nucleus. This is an uncharacterized protein from Schizosaccharomyces pombe (strain 972 / ATCC 24843) (Fission yeast).